The primary structure comprises 273 residues: tRNA (guanine-N(7)-)-methyltransferase A (273 aa).

6 residues coordinate S-adenosyl-L-methionine: G86, E109, R111, N142, A143, and L162. D165 is a catalytic residue. Positions 166-174 (PHFKKTKHK) are alphaC helix. The S-adenosyl-L-methionine site is built by T240 and E242. The tract at residues 240 to 248 (TEEGKKVQR) is alpha6 helix.

This sequence belongs to the class I-like SAM-binding methyltransferase superfamily. TrmB family. In terms of assembly, catalytic component of the METTL1-WDR4 complex, composed of mettl1 and wdr4.

Its subcellular location is the nucleus. The catalysed reaction is guanosine(46) in tRNA + S-adenosyl-L-methionine = N(7)-methylguanosine(46) in tRNA + S-adenosyl-L-homocysteine. The enzyme catalyses a guanosine in mRNA + S-adenosyl-L-methionine = an N(7)-methylguanosine in mRNA + S-adenosyl-L-homocysteine. It carries out the reaction a guanosine in miRNA + S-adenosyl-L-methionine = an N(7)-methylguanosine in miRNA + S-adenosyl-L-homocysteine. It participates in tRNA modification; N(7)-methylguanine-tRNA biosynthesis. Its function is as follows. Catalytic component of METTL1-WDR4 methyltransferase complex that mediates the formation of N(7)-methylguanine in a subset of RNA species, such as tRNAs, mRNAs and microRNAs (miRNAs). Catalyzes the formation of N(7)-methylguanine at position 46 (m7G46) in a large subset of tRNAs that contain the 5'-RAGGU-3' motif within the variable loop. M7G46 interacts with C13-G22 in the D-loop to stabilize tRNA tertiary structure and protect tRNAs from decay. Also acts as a methyltransferase for a subset of internal N(7)-methylguanine in mRNAs. Internal N(7)-methylguanine methylation of mRNAs in response to stress promotes their relocalization to stress granules, thereby suppressing their translation. Also methylates a specific subset of miRNAs. This Xenopus tropicalis (Western clawed frog) protein is tRNA (guanine-N(7)-)-methyltransferase A (mettl1-A).